The primary structure comprises 248 residues: 23S rRNA (guanosine-2'-O-)-methyltransferase RlmB (248 aa).

G198, L218, and L227 together coordinate S-adenosyl-L-methionine.

Belongs to the class IV-like SAM-binding methyltransferase superfamily. RNA methyltransferase TrmH family. RlmB subfamily.

It is found in the cytoplasm. It carries out the reaction guanosine(2251) in 23S rRNA + S-adenosyl-L-methionine = 2'-O-methylguanosine(2251) in 23S rRNA + S-adenosyl-L-homocysteine + H(+). Its function is as follows. Specifically methylates the ribose of guanosine 2251 in 23S rRNA. The protein is 23S rRNA (guanosine-2'-O-)-methyltransferase RlmB of Pseudomonas aeruginosa (strain ATCC 15692 / DSM 22644 / CIP 104116 / JCM 14847 / LMG 12228 / 1C / PRS 101 / PAO1).